The sequence spans 433 residues: Polygalacturonase ADPG2 (433 aa).

The N-terminal stretch at 1–24 (MARCTNLVTVFLLWALLMFSWCKA) is a signal peptide. 5 PbH1 repeats span residues 223–249 (CSNVQVSNVVVTAPADSPNTDGIHITN), 250–271 (TQNIRVSESIIGTGDDCISIES), 273–293 (SQNVQINDITCGPGHGISIGS), 303–324 (VSGVTVDGAKLSGTDNGVRIKT), and 332–353 (ASNIIFQNIQMDNVKNPIIIDQ). Asp264 serves as the catalytic Proton donor. His287 is a catalytic residue.

It belongs to the glycosyl hydrolase 28 family. Expressed in roots and in the abscission zone of the sepals, petals and stamens of flowers, at the base of cauline leaves and in the basal cell of trichomes from senescing leaves. Found at the site of lateral root emergence, in the dehiscence zone of anthers and maturing siliques. Also expressed early in anther development, at the time of microspore separation. Expressed in germinating seeds, at the point at which the radicle broke through the seed coat. Not expressed at the junction between the seed and the funiculus or in the dehiscence zone of anthers or pods.

The protein resides in the secreted. It localises to the cell wall. The catalysed reaction is (1,4-alpha-D-galacturonosyl)n+m + H2O = (1,4-alpha-D-galacturonosyl)n + (1,4-alpha-D-galacturonosyl)m.. In terms of biological role, polygalacturonase involved in cell separation in the final stages of pod shatter, in anther dehiscence and in floral organ abscission. The sequence is that of Polygalacturonase ADPG2 (ADPG2) from Arabidopsis thaliana (Mouse-ear cress).